Consider the following 400-residue polypeptide: Multidrug resistance protein MdtH (400 aa).

The Cytoplasmic segment spans residues 1–12; sequence MSRVSQARNLGK. A helical transmembrane segment spans residues 13–33; the sequence is YFLLIDNMLVVLGFFVVFPLI. Residues 34-98 are Periplasmic-facing; that stretch reads SIRFVDQMGW…GFATMGIAHE (65 aa). A helical transmembrane segment spans residues 99–116; sequence PWLLWFSCLLSGLGGTLF. Residues 117–138 are Cytoplasmic-facing; the sequence is DPPRSALVVKLIRPQQRGRFFS. A helical membrane pass occupies residues 139-159; the sequence is LLMMQDSAGAVIGALLGSWLL. The Periplasmic segment spans residues 160-164; that stretch reads QYDFR. Residues 165–185 traverse the membrane as a helical segment; that stretch reads LVCATGAVLFVLCAAFNAWLL. Topologically, residues 186–213 are cytoplasmic; it reads PAWKLSTVRTPVREGMTRVMRDKRFVTY. A helical transmembrane segment spans residues 214–232; that stretch reads VLTLAGYYMLAVQVMLPIM. At 233–241 the chain is on the periplasmic side; it reads VNDVAGAPS. The helical transmembrane segment at 242 to 262 threads the bilayer; the sequence is AVKWMYAIEACLSLTLLYPIA. Residues 263-274 are Cytoplasmic-facing; sequence RWSEKHFRLEHR. Residues 275 to 295 traverse the membrane as a helical segment; that stretch reads LMAGLLIMSLSMMPVGMVSGL. Topologically, residues 296-297 are periplasmic; the sequence is QQ. A helical transmembrane segment spans residues 298 to 318; that stretch reads LFTLICLFYIGSIIAEPARET. Residues 319-337 lie on the Cytoplasmic side of the membrane; sequence LSASLADARARGSYMGFSR. The chain crosses the membrane as a helical span at residues 338–358; that stretch reads LGLAIGGAIGYIGGGWLFDLG. The Periplasmic portion of the chain corresponds to 359-365; the sequence is KSAHQPE. The chain crosses the membrane as a helical span at residues 366–386; that stretch reads LPWMMLGIIGIFTFLALGWQF. At 387 to 400 the chain is on the cytoplasmic side; it reads SQKRAARRLLERDA.

Belongs to the major facilitator superfamily. DHA1 family. MdtH (TC 2.A.1.2.21) subfamily.

Its subcellular location is the cell inner membrane. This is Multidrug resistance protein MdtH from Shigella boydii serotype 4 (strain Sb227).